The sequence spans 201 residues: MSYVPIVVEPTSRGERAYDIYSRLLKERIIFVCSTVEDHMANLIVAQLLFLEAENPKKDIYMYINSPGGVVTAGLAIYDTMQYIKPKVATLCIGQACSMGSLLLCGGEKGMRYSLPHSRIMIHQPSGGYKGQATDIEIHAQETLKIKRLLNELYSKHTEQELKHIEKSMERDNFMSPEEAKKFGLVDNIMSSRDAMTLLAK.

The Nucleophile role is filled by Ser-98. Residue His-123 is part of the active site.

Belongs to the peptidase S14 family. In terms of assembly, fourteen ClpP subunits assemble into 2 heptameric rings which stack back to back to give a disk-like structure with a central cavity, resembling the structure of eukaryotic proteasomes.

It localises to the cytoplasm. The enzyme catalyses Hydrolysis of proteins to small peptides in the presence of ATP and magnesium. alpha-casein is the usual test substrate. In the absence of ATP, only oligopeptides shorter than five residues are hydrolyzed (such as succinyl-Leu-Tyr-|-NHMec, and Leu-Tyr-Leu-|-Tyr-Trp, in which cleavage of the -Tyr-|-Leu- and -Tyr-|-Trp bonds also occurs).. Its function is as follows. Cleaves peptides in various proteins in a process that requires ATP hydrolysis. Has a chymotrypsin-like activity. Plays a major role in the degradation of misfolded proteins. This Rickettsia peacockii (strain Rustic) protein is ATP-dependent Clp protease proteolytic subunit.